A 210-amino-acid polypeptide reads, in one-letter code: MGKGDPNKPRGKMSSYAFFVQTCREEHKKKHPDSSVNFAEFSKKCSERWKTMSAKEKSKFEDLAKSDKARYDREMKNYVPPKGDKKGKKKDPNAPKRPPSAFFLFCSENRPKIKIEHPGLSIGDTAKKLGEMWSEQSAKDKQPYEQKAAKLKEKYEKDIAAYRAKGKSEAGKKGPGRPTGSKKKNEPEDEEEEEEEEEEEDDEEEEEDEE.

At Lys-3 the chain carries N6-acetyllysine. The HMG box 1 DNA-binding region spans 9–79 (PRGKMSSYAF…RYDREMKNYV (71 aa)). Cys-23 bears the Cysteine sulfonic acid (-SO3H); alternate mark. A disulfide bridge links Cys-23 with Cys-45. Lys-30 is subject to N6-acetyllysine. Ser-35 bears the Phosphoserine mark. The residue at position 43 (Lys-43) is an N6-acetyllysine. At Cys-45 the chain carries Cysteine sulfonic acid (-SO3H); alternate. The segment at 71 to 102 (YDREMKNYVPPKGDKKGKKKDPNAPKRPPSAF) is disordered. Lys-90 carries the N6-acetyllysine modification. Residues 95-163 (PKRPPSAFFL…KYEKDIAAYR (69 aa)) constitute a DNA-binding region (HMG box 2). Ser-100 is subject to Phosphoserine. Cys-106 bears the Cysteine sulfonic acid (-SO3H) mark. An N6-acetyllysine mark is found at Lys-114 and Lys-141. Basic and acidic residues predominate over residues 162–172 (YRAKGKSEAGK). The disordered stretch occupies residues 162 to 210 (YRAKGKSEAGKKGPGRPTGSKKKNEPEDEEEEEEEEEEEDDEEEEEDEE). Residues 165 to 180 (KGKSEAGKKGPGRPTG) are required for chemotactic activity. Over residues 187–210 (PEDEEEEEEEEEEEDDEEEEEDEE) the composition is skewed to acidic residues.

The protein belongs to the HMGB family. As to quaternary structure, interacts with POU2F2, POU2F1 and POU3F1. Component of the RAG complex composed of core components RAG1 and RAG2, and associated component HMGB1 or HMGB2. Component of the SET complex, composed of at least ANP32A, APEX1, HMGB2, NME1, SET and TREX1. Directly interacts with SET. Interacts with LEF1. In terms of processing, reduction/oxidation of cysteine residues Cys-23, Cys-45 and Cys-106 and a possible intramolecular disulfide bond involving Cys-23 and Cys-45 give rise to different redox forms with specific functional activities in various cellular compartments: 1- fully reduced HMGB2 (HMGB2C23hC45hC106h), 2- disulfide HMGB2 (HMGB2C23-C45C106h) and 3- sulfonyl HMGB2 (HMGB2C23soC45soC106so). As to expression, widely expressed in embryo. In adult mainly expressed in lymphoid organs and testes. Expressed in primary spermatocytes. Expressed in the superficial zone of articular cartilage.

It localises to the nucleus. The protein localises to the chromosome. The protein resides in the cytoplasm. Its subcellular location is the secreted. Functionally, multifunctional protein with various roles in different cellular compartments. May act in a redox sensitive manner. In the nucleus is an abundant chromatin-associated non-histone protein involved in transcription, chromatin remodeling and V(D)J recombination and probably other processes. Binds DNA with a preference to non-canonical DNA structures such as single-stranded DNA. Can bent DNA and enhance DNA flexibility by looping thus providing a mechanism to promote activities on various gene promoters by enhancing transcription factor binding and/or bringing distant regulatory sequences into close proximity. Involved in V(D)J recombination by acting as a cofactor of the RAG complex: acts by stimulating cleavage and RAG protein binding at the 23 bp spacer of conserved recombination signal sequences (RSS). Proposed to be involved in the innate immune response to nucleic acids by acting as a cytoplasmic promiscuous immunogenic DNA/RNA sensor which cooperates with subsequent discriminative sensing by specific pattern recognition receptors. In the extracellular compartment acts as a chemokine. Promotes proliferation and migration of endothelial cells implicating AGER/RAGE. Has antimicrobial activity in gastrointestinal epithelial tissues. Involved in inflammatory response to antigenic stimulus coupled with pro-inflammatory activity. May play a role in germ cell differentiation. Involved in modulation of neurogenesis probably by regulation of neural stem proliferation. Involved in articular cartilage surface maintenance implicating LEF1 and the Wnt/beta-catenin pathway. In Mus musculus (Mouse), this protein is High mobility group protein B2 (Hmgb2).